We begin with the raw amino-acid sequence, 212 residues long: Probable GH family 25 lysozyme 2 (212 aa).

The signal sequence occupies residues 1–19; sequence MRFIALLISFFALLKVISA. Positions 20 to 212 constitute a Ch-type lysozyme domain; it reads ISGVDISSAS…GLGFDLNWYP (193 aa). Active-site residues include D24, D112, and E114.

The protein belongs to the glycosyl hydrolase 25 family.

It is found in the secreted. It carries out the reaction Hydrolysis of (1-&gt;4)-beta-linkages between N-acetylmuramic acid and N-acetyl-D-glucosamine residues in a peptidoglycan and between N-acetyl-D-glucosamine residues in chitodextrins.. The sequence is that of Probable GH family 25 lysozyme 2 from Dictyostelium discoideum (Social amoeba).